The following is a 231-amino-acid chain: Large ribosomal subunit protein uL1 (231 aa).

It belongs to the universal ribosomal protein uL1 family. As to quaternary structure, part of the 50S ribosomal subunit.

Its function is as follows. Binds directly to 23S rRNA. The L1 stalk is quite mobile in the ribosome, and is involved in E site tRNA release. Protein L1 is also a translational repressor protein, it controls the translation of the L11 operon by binding to its mRNA. This Ralstonia pickettii (strain 12J) protein is Large ribosomal subunit protein uL1.